The sequence spans 562 residues: Probable sesquiterpene synthase (562 aa).

Positions 315, 319, and 467 each coordinate Mg(2+). Positions 315–319 (DDIYD) match the DDXXD motif motif.

It belongs to the terpene synthase family. Tpsa subfamily. It depends on Mg(2+) as a cofactor. Requires Mn(2+) as cofactor.

Sesquiterpene synthase. The protein is Probable sesquiterpene synthase (STPS) of Santalum murrayanum (Bitter quandong).